Reading from the N-terminus, the 656-residue chain is Putative L-type lectin-domain containing receptor kinase V.2 (656 aa).

The signal sequence occupies residues 1 to 23 (MSLLLKMLLFSLFFFYMASISQC). Residues 24–276 (SDPTGGQFSF…EDQERSLSSK (253 aa)) are Extracellular-facing. The segment at 29–248 (GQFSFNGYLY…SHYILGWSFN (220 aa)) is legume-lectin like. Residues Asn78, Asn124, Asn159, Asn190, and Asn257 are each glycosylated (N-linked (GlcNAc...) asparagine). A helical membrane pass occupies residues 277–297 (ILAISLSISGVTLVIVLILGV). The Cytoplasmic segment spans residues 298 to 656 (MLFLKRKKFL…MTESFLSSGR (359 aa)). The Protein kinase domain occupies 334–615 (FKNSEVLGKG…GVATLPHNLL (282 aa)). ATP contacts are provided by residues 340–348 (LGKGGFGKV) and Lys363. Residue Asp459 is the Proton acceptor of the active site.

It in the C-terminal section; belongs to the protein kinase superfamily. Ser/Thr protein kinase family. In the N-terminal section; belongs to the leguminous lectin family.

It localises to the cell membrane. The enzyme catalyses L-seryl-[protein] + ATP = O-phospho-L-seryl-[protein] + ADP + H(+). The catalysed reaction is L-threonyl-[protein] + ATP = O-phospho-L-threonyl-[protein] + ADP + H(+). This is Putative L-type lectin-domain containing receptor kinase V.2 (LECRK52) from Arabidopsis thaliana (Mouse-ear cress).